The following is a 166-amino-acid chain: Ribonuclease H (166 aa).

The RNase H type-1 domain maps to 5-147 (PRKRVALFTD…VDREARRQAQ (143 aa)). Residues D14, E52, D74, and D139 each coordinate Mg(2+). The disordered stretch occupies residues 128–166 (GHTGHPENERVDREARRQAQSQAKTPCPPQAPTLFHEEA). Residues 131–144 (GHPENERVDREARR) are compositionally biased toward basic and acidic residues.

It belongs to the RNase H family. In terms of assembly, monomer. Requires Mg(2+) as cofactor.

Its subcellular location is the cytoplasm. The enzyme catalyses Endonucleolytic cleavage to 5'-phosphomonoester.. In terms of biological role, endonuclease that specifically degrades the RNA of RNA-DNA hybrids. This is Ribonuclease H from Thermus thermophilus (strain ATCC BAA-163 / DSM 7039 / HB27).